The following is a 241-amino-acid chain: UDP-2,3-diacylglucosamine hydrolase (241 aa).

Positions 8, 10, 41, 78, and 113 each coordinate Mn(2+). Residue 78 to 79 (NR) participates in substrate binding. Substrate is bound by residues aspartate 121, serine 159, asparagine 163, lysine 166, and histidine 194. 2 residues coordinate Mn(2+): histidine 194 and histidine 196.

This sequence belongs to the LpxH family. The cofactor is Mn(2+).

The protein resides in the cell inner membrane. The enzyme catalyses UDP-2-N,3-O-bis[(3R)-3-hydroxytetradecanoyl]-alpha-D-glucosamine + H2O = 2-N,3-O-bis[(3R)-3-hydroxytetradecanoyl]-alpha-D-glucosaminyl 1-phosphate + UMP + 2 H(+). Its pathway is glycolipid biosynthesis; lipid IV(A) biosynthesis; lipid IV(A) from (3R)-3-hydroxytetradecanoyl-[acyl-carrier-protein] and UDP-N-acetyl-alpha-D-glucosamine: step 4/6. Functionally, hydrolyzes the pyrophosphate bond of UDP-2,3-diacylglucosamine to yield 2,3-diacylglucosamine 1-phosphate (lipid X) and UMP by catalyzing the attack of water at the alpha-P atom. Involved in the biosynthesis of lipid A, a phosphorylated glycolipid that anchors the lipopolysaccharide to the outer membrane of the cell. The chain is UDP-2,3-diacylglucosamine hydrolase from Shewanella putrefaciens (strain CN-32 / ATCC BAA-453).